The primary structure comprises 162 residues: 2-C-methyl-D-erythritol 2,4-cyclodiphosphate synthase (162 aa).

A divalent metal cation contacts are provided by Asp9 and His11. 4-CDP-2-C-methyl-D-erythritol 2-phosphate-binding positions include Asp9–His11 and His35–Ser36. His43 contributes to the a divalent metal cation binding site. Residues Asp57 to Gly59, Phe62 to Asp66, Thr133 to Glu136, Phe140, and Arg143 each bind 4-CDP-2-C-methyl-D-erythritol 2-phosphate.

The protein belongs to the IspF family. Homotrimer. A divalent metal cation is required as a cofactor.

It catalyses the reaction 4-CDP-2-C-methyl-D-erythritol 2-phosphate = 2-C-methyl-D-erythritol 2,4-cyclic diphosphate + CMP. The protein operates within isoprenoid biosynthesis; isopentenyl diphosphate biosynthesis via DXP pathway; isopentenyl diphosphate from 1-deoxy-D-xylulose 5-phosphate: step 4/6. Functionally, involved in the biosynthesis of isopentenyl diphosphate (IPP) and dimethylallyl diphosphate (DMAPP), two major building blocks of isoprenoid compounds. Catalyzes the conversion of 4-diphosphocytidyl-2-C-methyl-D-erythritol 2-phosphate (CDP-ME2P) to 2-C-methyl-D-erythritol 2,4-cyclodiphosphate (ME-CPP) with a corresponding release of cytidine 5-monophosphate (CMP). This chain is 2-C-methyl-D-erythritol 2,4-cyclodiphosphate synthase, found in Histophilus somni (strain 2336) (Haemophilus somnus).